The sequence spans 159 residues: Protein Smg homolog (159 aa).

Belongs to the Smg family.

The protein is Protein Smg homolog of Dichelobacter nodosus (strain VCS1703A).